The sequence spans 212 residues: Nitrogen regulatory protein P-II homolog (212 aa).

3 stretches are compositionally biased toward low complexity: residues 1–12, 32–46, and 63–74; these read MSSPATAAAAAA, TTTT…SRSR, and PPTAARAQSAAA. The N-terminal 68 residues, 1–68, are a transit peptide targeting the chloroplast; sequence MSSPATAAAA…PRRLPPTAAR (68 aa). The disordered stretch occupies residues 1–74; that stretch reads MSSPATAAAA…TAARAQSAAA (74 aa). ATP is bound by residues 117-121 and 170-173; these read GFGAQ and GDGK. Gly119 contributes to the Mg(2+) binding site.

It belongs to the P(II) protein family. Homodimer.

Its subcellular location is the plastid. The protein resides in the chloroplast. Participates in sensing carbon and organic nitrogen status and regulates some steps of primary carbon and nitrogen metabolism. This is Nitrogen regulatory protein P-II homolog (GLB) from Oryza sativa subsp. japonica (Rice).